The following is a 107-amino-acid chain: U1-lycotoxin-Ls1b (107 aa).

The first 20 residues, 1 to 20 (MMKVLVVVALLPTLISYSSS), serve as a signal peptide directing secretion. Residues 21–41 (EGIDDLEADELLSLMANEQTR) constitute a propeptide that is removed on maturation. 4 disulfide bridges follow: C44–C59, C51–C68, C58–C86, and C70–C84.

Belongs to the neurotoxin 19 (CSTX) family. 04 (U1-Lctx) subfamily. In terms of tissue distribution, expressed by the venom gland.

The protein localises to the secreted. The sequence is that of U1-lycotoxin-Ls1b from Lycosa singoriensis (Wolf spider).